We begin with the raw amino-acid sequence, 337 residues long: Transcription factor bHLH121 (337 aa).

The bHLH domain occupies 58–108; it reads ARKSQKAGREKLRREKLNEHFVELGNVLDPERPKNDKATILTDTVQLLKEL. Residues 235 to 337 are disordered; it reads VHIPQNPGNR…AGGQKPDDAK (103 aa). Basic and acidic residues-rich tracts occupy residues 244-263 and 280-291; these read RSRE…KAED and SDKDTLQRPEKT. A compositionally biased stretch (low complexity) spans 297 to 317; sequence NNNNNSIEESSHSSKCSSSPS.

In terms of assembly, homodimer. As to expression, expressed constitutively in roots, leaves, stems, and flowers.

Its subcellular location is the nucleus. This chain is Transcription factor bHLH121 (BHLH121), found in Arabidopsis thaliana (Mouse-ear cress).